A 664-amino-acid chain; its full sequence is Cyclic nucleotide-gated channel alpha-2 (664 aa).

The segment covering 1 to 10 has biased composition (polar residues); sequence MMTEKSNGVK. Residues 1-61 are disordered; that stretch reads MMTEKSNGVK…LQRLAEMDTP (61 aa). At 1-146 the chain is on the cytoplasmic side; that stretch reads MMTEKSNGVK…PAGDWYYRWL (146 aa). A helical membrane pass occupies residues 147–168; sequence FVIAMPVLYNWCLLVARACFSD. Topologically, residues 169–178 are extracellular; sequence LQRNYFVVWL. Residues 179-199 form a helical membrane-spanning segment; it reads VLDYFSDTVYIADLIIRLRTG. The Cytoplasmic segment spans residues 200 to 224; sequence FLEQGLLVKDPKKLRDNYIHTLQFK. The chain crosses the membrane as a helical span at residues 225–243; that stretch reads LDVASIIPTDLIYFAVGIH. The Extracellular segment spans residues 244–248; that stretch reads SPEVR. The helical transmembrane segment at 249–267 threads the bilayer; it reads FNRLLHFARMFEFFDRTET. Residues 268-274 are Cytoplasmic-facing; it reads RTSYPNI. An ion conduction pathway region spans residues 272–380; the sequence is PNIFRISNLV…GNVGSMISNM (109 aa). A helical membrane pass occupies residues 275 to 298; it reads FRISNLVLYILVIIHWNACIYYAI. Residues 299–321 are Extracellular-facing; it reads SKSIGFGVDTWVYPNITDPEYGY. 2 consecutive transmembrane segments (helical) span residues 322-356 and 357-381; these read LAREYIYCLYWSTLTLTTIGETPPPVKDEEYLFVI and FDFLIGVLIFATIVGNVGSMISNMN. The interval 339–342 is selectivity filter; sequence TIGE. A C-linker region spans residues 382–458; sequence ATRAEFQAKI…STLKKVRIFQ (77 aa). Residues 382–664 are Cytoplasmic-facing; sequence ATRAEFQAKI…INTPEPAVAE (283 aa). The interval 462 to 582 is cyclic nucleotide-binding domain; the sequence is AGLLVELVLK…EERGREILMK (121 aa). 3',5'-cyclic GMP-binding residues include glycine 522, serine 525, arginine 538, and threonine 539. 3',5'-cyclic AMP contacts are provided by arginine 538 and threonine 539. Positions 599-653 form a coiled coil; it reads VQEKLEQLETNMETLYTRFARLLAEYTGAQQKLKQRITVLETKMKQNHEDDYLSD.

Belongs to the cyclic nucleotide-gated cation channel (TC 1.A.1.5) family. CNGA2 subfamily. The olfactory cyclic nucleotide-gated channel is an heterotetramer composed of CNGA2, CNGA4 and CNGB1b subunits with 2:1:1 stoichiometry.

The protein resides in the cell projection. Its subcellular location is the cilium membrane. It catalyses the reaction Ca(2+)(in) = Ca(2+)(out). It carries out the reaction Na(+)(in) = Na(+)(out). The catalysed reaction is K(+)(in) = K(+)(out). The enzyme catalyses NH4(+)(in) = NH4(+)(out). It catalyses the reaction Rb(+)(in) = Rb(+)(out). It carries out the reaction Li(+)(in) = Li(+)(out). The catalysed reaction is Cs(+)(in) = Cs(+)(out). Its function is as follows. Pore-forming subunit of the olfactory cyclic nucleotide-gated channel. Operates in the cilia of olfactory sensory neurons where chemical stimulation of the odorant is converted to an electrical signal. Mediates odorant-induced cAMP-dependent Ca(2+) influx triggering neuron depolarization. The rise of intracellular Ca(2+) levels potentiates the olfactory response by activating Ca(2+)-dependent Cl(-) channels, but it also serves as a negative feedback signal to desensitize the channel for rapid adaptation to odorants. Conducts cAMP- and cGMP-gated ion currents, with permeability for monovalent and divalent cations. This Mus musculus (Mouse) protein is Cyclic nucleotide-gated channel alpha-2.